The chain runs to 380 residues: Crotonobetainyl-CoA reductase (380 aa).

The protein belongs to the acyl-CoA dehydrogenase family. In terms of assembly, homotetramer. Requires FAD as cofactor.

It is found in the cytoplasm. The enzyme catalyses 4-(trimethylamino)butanoyl-CoA + oxidized [electron-transfer flavoprotein] + H(+) = crotonobetainyl-CoA + reduced [electron-transfer flavoprotein]. Its pathway is amine and polyamine metabolism; carnitine metabolism. Its function is as follows. Catalyzes the reduction of crotonobetainyl-CoA to gamma-butyrobetainyl-CoA. This chain is Crotonobetainyl-CoA reductase, found in Proteus sp. (strain LE138).